The chain runs to 354 residues: 3-dehydroquinate synthase (354 aa).

Residues 61-66, 119-120, K132, K141, and 159-162 each bind NAD(+); these read DGESTK, TT, and FLET. 3 residues coordinate Zn(2+): E174, H238, and H254.

The protein belongs to the sugar phosphate cyclases superfamily. Dehydroquinate synthase family. NAD(+) serves as cofactor. Co(2+) is required as a cofactor. The cofactor is Zn(2+).

The protein localises to the cytoplasm. It carries out the reaction 7-phospho-2-dehydro-3-deoxy-D-arabino-heptonate = 3-dehydroquinate + phosphate. The protein operates within metabolic intermediate biosynthesis; chorismate biosynthesis; chorismate from D-erythrose 4-phosphate and phosphoenolpyruvate: step 2/7. In terms of biological role, catalyzes the conversion of 3-deoxy-D-arabino-heptulosonate 7-phosphate (DAHP) to dehydroquinate (DHQ). This Saccharolobus solfataricus (strain ATCC 35092 / DSM 1617 / JCM 11322 / P2) (Sulfolobus solfataricus) protein is 3-dehydroquinate synthase.